Here is an 89-residue protein sequence, read N- to C-terminus: Small ribosomal subunit protein uS15 (89 aa).

This sequence belongs to the universal ribosomal protein uS15 family. In terms of assembly, part of the 30S ribosomal subunit. Forms a bridge to the 50S subunit in the 70S ribosome, contacting the 23S rRNA.

In terms of biological role, one of the primary rRNA binding proteins, it binds directly to 16S rRNA where it helps nucleate assembly of the platform of the 30S subunit by binding and bridging several RNA helices of the 16S rRNA. Functionally, forms an intersubunit bridge (bridge B4) with the 23S rRNA of the 50S subunit in the ribosome. The polypeptide is Small ribosomal subunit protein uS15 (Pectobacterium atrosepticum (strain SCRI 1043 / ATCC BAA-672) (Erwinia carotovora subsp. atroseptica)).